A 117-amino-acid polypeptide reads, in one-letter code: Large ribosomal subunit protein bL20 (117 aa).

This sequence belongs to the bacterial ribosomal protein bL20 family.

Functionally, binds directly to 23S ribosomal RNA and is necessary for the in vitro assembly process of the 50S ribosomal subunit. It is not involved in the protein synthesizing functions of that subunit. The sequence is that of Large ribosomal subunit protein bL20 from Trichlorobacter lovleyi (strain ATCC BAA-1151 / DSM 17278 / SZ) (Geobacter lovleyi).